A 361-amino-acid chain; its full sequence is MKASLQGKLDKLADRFEELAGLLSDPDVISNQNQFRDLSREYAEIDPVVKCYRQYQQAVEDHGAAKAMQDDSDADMREMGAEEARDAQERMEALAAELQKLMLPKDPRDGANVFLEVRAGTGGDEAAIFAGDLFRMYSKYADQRGWKVEMVSASEGEHGGYKEVIARVIGDGVYSRMKFESGAHRVQRVPATESQGRIHTSACTVAIMAEAEDLGDIKIRTEDLRIDTYRSSGAGGQHVNTTDSAVRITHLPTGVVVECQDERSQHKNKARAMSLLSAKLYDAQQNAAHAEQAAERKSLVGSGDRSERIRTYNYPQGRVTDHRINLTLYRLNEIVEGDLDEILGALLAEYQADQLAALGEH.

N5-methylglutamine is present on glutamine 237.

The protein belongs to the prokaryotic/mitochondrial release factor family. In terms of processing, methylated by PrmC. Methylation increases the termination efficiency of RF1.

It localises to the cytoplasm. Peptide chain release factor 1 directs the termination of translation in response to the peptide chain termination codons UAG and UAA. This Alcanivorax borkumensis (strain ATCC 700651 / DSM 11573 / NCIMB 13689 / SK2) protein is Peptide chain release factor 1.